Reading from the N-terminus, the 168-residue chain is Putative F-box protein At1g30945 (168 aa).

Positions 5-52 (KTFDSISNDLFLEILLRLSTKSIDRSRCVSKQWASILCSQDFTESEKF) constitute an F-box domain.

In Arabidopsis thaliana (Mouse-ear cress), this protein is Putative F-box protein At1g30945.